The chain runs to 324 residues: Hydroxylase/desaturase CTB9 (324 aa).

Over residues 1–11 (MTSTITTTETL) the composition is skewed to polar residues. Disordered regions lie at residues 1 to 33 (MTSTITTTETLQDAVPFVAPPSPPEDTSNKELP) and 288 to 308 (TARRVPHSSFPTPDDFGEPRA).

Belongs to the asaB hydroxylase/desaturase family.

The protein operates within mycotoxin biosynthesis. Its function is as follows. Hydroxylase/desaturase; part of the gene cluster that mediates the biosynthesis of cercosporin, a light-activated, non-host-selective toxin. The perylenequinone chromophore of cercosporin absorbs light energy to attain an electronically-activated triplet state and produces active oxygen species such as the hydroxyl radical, superoxide, hydrogen peroxide or singlet oxygen upon reaction with oxygen molecules. These reactive oxygen species cause damage to various cellular components including lipids, proteins and nucleic acids. The first step of cercosporin biosynthesis is performed by the polyketide synthase CTB1 which catalyzes the formation of nor-toralactone. The starter unit acyltransferase (SAT) domain of CTB1 initiates polyketide extension by the selective utilization of acetyl-CoA, which is elongated to the heptaketide in the beta-ketoacyl synthase (KS) domain by successive condensations with six malonyl units introduced by the malonyl acyltransferase (MAT) domain. The product template (PT) domain catalyzes C4-C9 and C2-C11 aldol cyclizations and dehydrations to a trihydroxynaphthalene, which is thought to be delivered to the thioesterase (TE) domain for product release. The bifunctional enzyme CTB3 then methylates nor-toralactone to toralactone before conducting an unusual oxidative aromatic ring opening. The O-methyltransferase CTB2 further methylates the nascent OH-6 of the CBT3 product, blocking further oxidation at this site before the reductase CTB6 reduces the 2-oxopropyl ketone at position C7, giving naphthalene. The FAD-dependent monooxygenase CTB5 in concert with the multicopper oxidase CTB12 are responsible for homodimerization of naphthalene with CTB7 installing the dioxepine moiety, finally producing cercosporin. The fasciclin domain-containing protein CTB11 might act with CTB5 and CTB12 whereas the roles of CTB9 and CTB10 have still to be elucidated. This chain is Hydroxylase/desaturase CTB9, found in Cercospora beticola (Sugarbeet leaf spot fungus).